The following is a 210-amino-acid chain: Regulator of G-protein signaling 17 (210 aa).

The disordered stretch occupies residues Met1–Asn21. The region spanning Asn84–Val200 is the RGS domain.

As to quaternary structure, interacts with GNAI1 and GNAQ. Interacts with GNAZ and GNAI2. Forms a complex with mu-opioid receptors and G(alpha)z/i2 subunits, including GNAZ and GNAI2; the formation of this complex results in mu-opioid receptor desensitization. Post-translationally, N- and O-glycosylated in synapsomal membranes. In terms of processing, serine phosphorylated in synapsomal membranes. Sumoylated with SUMO1 and SUM02 in synaptosomes. The sumoylated forms act as a scaffold for sequestering mu-opioid receptor-activated G(alpha) subunits.

Its subcellular location is the membrane. The protein localises to the synapse. The protein resides in the synaptosome. It is found in the nucleus. It localises to the cytoplasm. Its function is as follows. Regulates G protein-coupled receptor signaling cascades, including signaling via muscarinic acetylcholine receptor CHRM2 and dopamine receptor DRD2. Inhibits signal transduction by increasing the GTPase activity of G protein alpha subunits, thereby driving them into their inactive GDP-bound form. Binds selectively to GNAZ and GNAI2 subunits, accelerates their GTPase activity and regulates their signaling activities. Negatively regulates mu-opioid receptor-mediated activation of the G-proteins. This chain is Regulator of G-protein signaling 17 (RGS17), found in Gallus gallus (Chicken).